The following is a 48-amino-acid chain: ATP synthase protein 8 (48 aa).

Residues 13-32 (VVFTLISLSFIFFVFSKYIL) form a helical membrane-spanning segment.

It belongs to the ATPase protein 8 family. In terms of assembly, F-type ATPases have 2 components, CF(1) - the catalytic core - and CF(0) - the membrane proton channel.

It localises to the mitochondrion membrane. In terms of biological role, mitochondrial membrane ATP synthase (F(1)F(0) ATP synthase or Complex V) produces ATP from ADP in the presence of a proton gradient across the membrane which is generated by electron transport complexes of the respiratory chain. F-type ATPases consist of two structural domains, F(1) - containing the extramembraneous catalytic core and F(0) - containing the membrane proton channel, linked together by a central stalk and a peripheral stalk. During catalysis, ATP synthesis in the catalytic domain of F(1) is coupled via a rotary mechanism of the central stalk subunits to proton translocation. Part of the complex F(0) domain. Minor subunit located with subunit a in the membrane. The protein is ATP synthase protein 8 (ATP8) of Trichophyton rubrum (Athlete's foot fungus).